The following is a 504-amino-acid chain: MDQVYLPQSVRTAVAVSFGVGLLYWVYRLLLQKTKSLKALDLPVLQSVGDQDIVKTLEEGHAKYPDTPFALGVPGQQLVVLPVSEIDTVKALPENQLSIKKHHYNQFLGEYSYMGTKADEFDDAMRYLLVRNTPAVLASFTAEIDYAMSTVLQVPPNSWTRVKPRSIMPKVATILSGRAFVGLPLSREPDWIESNVNYTQDVSRAWMVLRFYPHWIRPLVAPFLREVKTLEQNKALIGRKIAKLLADQEAQKLSPAQEKIPGGDMIDWFKSRYQAQGKTATAQQLTRDQLLATFASIYNLSNALTYVMFDLAANPAAVDELREELDQVLGPNVGAESIDKTALPRLIKLDSFVRESQRLSPTSLVNIPRIVTDPNGLRLKTGHVIPPGYLVMVRAQPINQSPTLYPNPERFDAFRFARLRQQGGANENRWQHTSTGADNINFGHGIWACPGRFFASAEIKVVVAYVIRHYDLRLIEGRPHPKPKYGGLAIFPDAGAEVELKPRV.

Residues A13–L31 traverse the membrane as a helical segment. N-linked (GlcNAc...) asparagine glycans are attached at residues N197 and N299. C449 provides a ligand contact to heme.

It belongs to the cytochrome P450 family. Heme serves as cofactor.

The protein resides in the membrane. It participates in mycotoxin biosynthesis. Functionally, cytochrome P450 monooxygenase; part of the gene cluster that mediates the biosynthesis of gliotoxin, a member of the epipolythiodioxopiperazine (ETP) class of toxins characterized by a disulfide bridged cyclic dipeptide. The first step in gliotoxin biosynthesis is the condensation of serine and phenylalanine to form the cyclo-L-phenylalanyl-L-serine diketopiperazine (DKP) by the NRPS gliP. GliP is also able to produce the DKP cyclo-L-tryptophanyl-L-serine, suggesting that the substrate specificity of the first adenylation (A) domain in gliP is sufficiently relaxed to accommodate both L-Phe and L-Trp. The cytochrome P450 monooxygenase gliC has been shown to catalyze the subsequent hydroxylation of the alpha-carbon of L-Phe in cyclo-L-phenylalanyl-L-serine whereas the second cytochrome P450 enzyme, gliF, is presumably involved in the modification of the DKP side chain. The glutathione S-transferase (GST) gliG then forms a bis-glutathionylated biosynthetic intermediate which is responsible for the sulfurization of gliotoxin. This bis-glutathionylated intermediate is subsequently processed by the gamma-glutamyl cyclotransferase gliK to remove both gamma-glutamyl moieties. Subsequent processing via gliI yields a biosynthetic intermediate, which is N-methylated via the N-methyltransferase gliN, before the gliotoxin oxidoreductase gliT-mediated disulfide bridge closure. GliN-mediated amide methylation confers stability to ETP, damping the spontaneous formation of tri- and tetrasulfides. Intracellular dithiol gliotoxin oxidized by gliT is subsequently effluxed by gliA. Gliotoxin contributes to pathogenesis during invasive aspergillosis. In macrophages and neutrophils, gliotoxin showed inhibition of various different cell functions including cytokine production, antigen presentation, phagocytosis, and production of reactive oxygen species. The protein is Cytochrome P450 monooxygenase gliF of Aspergillus fumigatus (strain ATCC MYA-4609 / CBS 101355 / FGSC A1100 / Af293) (Neosartorya fumigata).